We begin with the raw amino-acid sequence, 1026 residues long: MVCRPVFPCRRRFCPRPFLVGLVVAICLFYQTLTLRGSRKLTAAAPGAVPHTSTETQASRCKKGFSQDKQCFLLSGNAQETRKVKESMETHFGSHGRRAILYRPPFYSKTELQLHQHILTQHGYTVVIAEERLNAGLGPGLLEQGDLGSWDLLICLSSKKAEGTPCISKEVMCQLGLHQKANRLPEIQQPLCRKEGLCQIVRRFPELQLPVSPSVCLDQGMQLKPSTSSHLLKTVKPRVWKPGDWSREQLNETTVLAPHETIFRAEDLSVILKAYVLVTSLTPLRAFIHSTGTVWNPPKKKRFTVKLQTFFETFLRASSPQQAFDIMKEAIGKLLLAAEVFSETSTLGPKTFHRCRFCFQLLTFDIGYGSFMYPVVLQVHEHLNFQDYDNMDFEDQNTEEFLLNDTFNFLFPNESSLSIFSEIFQRLYRSDVFKGENYQKELNQCLSLEEINSIMTFIKELGSLGQFQLLFPSTTPGIQSLMHEFYDVANPVGNPGSVLTQYWSLLNVFEQFQFMNKKTQPHPLEWNSFTEDKNIEKPQVPFDAIENKKAAVPQIKNENKEIHCSDDENTPCHIKQIFTHPHLELNPDFHPKIKDYYCEVPFDVVTVTIGVETPKCLCKVHLYEQAGPSFASYPLGLGMNKISIFVVDESPAHGETLITYKLTIYREDRPSLPLFEAFTACGFVQDCGLLIHPEETCGLQPISSDYIEAILQSELKRCPSGDMKGQWIVPCLSCSDNRTCDWREITWQPHNCQYGVLTKPQLQQCLGGRKILFIGDSTNRGIMYYLIERLNETLQEWQKVHGTKFYHNVNGGKTLISYSYYPQFWISPSLRPTFENALEHLLQRSRPLENTGQTVLVVGGVQWLNSNHLQIIHKVLKRENLLNILVIIKTLGIGFHLPVDGVHFLTQSEVQNLWKENLIILDTAKKHGYEVVDTFTITMGRYKEFLQGKCGCHFHEVVKSKLSKEYNFIKMKRSRNHIMGRYFSNQSKLQQGTVTNFRSPYHVRGPINQVCSEILLSRMCANKRTM.

Positions 1-34 are cleaved as a signal peptide; sequence MVCRPVFPCRRRFCPRPFLVGLVVAICLFYQTLT. Residues N251, N404, N413, N737, N791, and N985 are each glycosylated (N-linked (GlcNAc...) asparagine).

Belongs to the PC-esterase family.

This is Cadherin-like and PC-esterase domain-containing protein 1 (CPED1) from Homo sapiens (Human).